The following is a 37-amino-acid chain: Large ribosomal subunit protein bL36 (37 aa).

The protein belongs to the bacterial ribosomal protein bL36 family.

This is Large ribosomal subunit protein bL36 from Staphylococcus aureus (strain Mu3 / ATCC 700698).